Here is a 136-residue protein sequence, read N- to C-terminus: Small ribosomal subunit protein bS6 (136 aa).

Positions 97–128 (EKEQSAMLSRPDRDDFPGKDEERPRPSRRQYE) are enriched in basic and acidic residues. The segment at 97 to 136 (EKEQSAMLSRPDRDDFPGKDEERPRPSRRQYEDVVEGGVE) is disordered.

The protein belongs to the bacterial ribosomal protein bS6 family.

Functionally, binds together with bS18 to 16S ribosomal RNA. The protein is Small ribosomal subunit protein bS6 of Bartonella bacilliformis (strain ATCC 35685 / KC583 / Herrer 020/F12,63).